A 132-amino-acid polypeptide reads, in one-letter code: MATPRSAKKAARKSGSKSAKCGLIFPVGRVGGMMRRGQYARRIGASGAVYLAAVLEYLTAELLELSVKAAAQSGKKRCRLNPRTVMLAARHDDDIGTLLKNVTLSHSGVVPSVSKAVAKKKGGKKGRATPSA.

It belongs to the histone H2A family. The nucleosome is a histone octamer containing two molecules each of H2A, H2B, H3 and H4 assembled in one H3-H4 heterotetramer and two H2A-H2B heterodimers. The octamer wraps approximately 147 bp of DNA.

The protein resides in the nucleus. It is found in the chromosome. In terms of biological role, core component of nucleosome. Nucleosomes wrap and compact DNA into chromatin, limiting DNA accessibility to the cellular machineries which require DNA as a template. Histones thereby play a central role in transcription regulation, DNA repair, DNA replication and chromosomal stability. DNA accessibility is regulated via a complex set of post-translational modifications of histones, also called histone code, and nucleosome remodeling. This is Histone H2A.2 from Leishmania infantum.